The primary structure comprises 151 residues: UPF0735 ACT domain-containing protein SERP1207 (151 aa).

An ACT domain is found at 74-149; it reads TLILYVNDIV…HVTKVDLISM (76 aa).

Belongs to the UPF0735 family.

The protein is UPF0735 ACT domain-containing protein SERP1207 of Staphylococcus epidermidis (strain ATCC 35984 / DSM 28319 / BCRC 17069 / CCUG 31568 / BM 3577 / RP62A).